Reading from the N-terminus, the 140-residue chain is Ribonuclease P protein component (140 aa).

The protein belongs to the RnpA family. As to quaternary structure, consists of a catalytic RNA component (M1 or rnpB) and a protein subunit.

It carries out the reaction Endonucleolytic cleavage of RNA, removing 5'-extranucleotides from tRNA precursor.. Its function is as follows. RNaseP catalyzes the removal of the 5'-leader sequence from pre-tRNA to produce the mature 5'-terminus. It can also cleave other RNA substrates such as 4.5S RNA. The protein component plays an auxiliary but essential role in vivo by binding to the 5'-leader sequence and broadening the substrate specificity of the ribozyme. This is Ribonuclease P protein component from Ralstonia pickettii (strain 12J).